A 190-amino-acid polypeptide reads, in one-letter code: 7-methyl-GTP pyrophosphatase (190 aa).

The Proton acceptor role is filled by aspartate 69.

This sequence belongs to the Maf family. YceF subfamily. The cofactor is a divalent metal cation.

The protein resides in the cytoplasm. The catalysed reaction is N(7)-methyl-GTP + H2O = N(7)-methyl-GMP + diphosphate + H(+). Functionally, nucleoside triphosphate pyrophosphatase that hydrolyzes 7-methyl-GTP (m(7)GTP). May have a dual role in cell division arrest and in preventing the incorporation of modified nucleotides into cellular nucleic acids. The chain is 7-methyl-GTP pyrophosphatase from Xanthomonas oryzae pv. oryzae (strain MAFF 311018).